Reading from the N-terminus, the 498-residue chain is Elastase (498 aa).

The N-terminal stretch at M1–A23 is a signal peptide. A propeptide spanning residues A24–H197 is cleaved from the precursor. Residues C227 and C255 are joined by a disulfide bond. The residue at position 236 (T236) is a Phosphothreonine. Residue D333 participates in Ca(2+) binding. H337 provides a ligand contact to Zn(2+). E338 is a catalytic residue. Zn(2+)-binding residues include H341 and E361. Positions 369, 372, 380, and 382 each coordinate Ca(2+). H420 acts as the Proton donor in catalysis. C467 and C494 are oxidised to a cystine.

This sequence belongs to the peptidase M4 family. It depends on Ca(2+) as a cofactor. Zn(2+) is required as a cofactor. Post-translationally, made as a pre-pro-protein which is exported to the periplasm. Probably autocatalyzes cleavage of its pro-peptide. The pro-peptide can be secreted with mature elastase.

Its subcellular location is the secreted. The catalysed reaction is Hydrolysis of proteins including elastin, collagen types III and IV, fibronectin and immunoglobulin A, generally with bulky hydrophobic group at P1'. Insulin B chain cleavage pattern identical to that of thermolysin, but specificity differs in other respects.. Its function is as follows. Cleaves host elastase, collagen, IgI and several complement components as well as endogenous pro-aminopeptidase, pro-chitin-binding protein (cbpD). Cleaves its own pro-peptide. Involved in the pathogenesis of P.aeruginosa infections. In Pseudomonas aeruginosa (strain UCBPP-PA14), this protein is Elastase (lasB).